The following is a 364-amino-acid chain: Aminomethyltransferase (364 aa).

The protein belongs to the GcvT family. The glycine cleavage system is composed of four proteins: P, T, L and H.

It carries out the reaction N(6)-[(R)-S(8)-aminomethyldihydrolipoyl]-L-lysyl-[protein] + (6S)-5,6,7,8-tetrahydrofolate = N(6)-[(R)-dihydrolipoyl]-L-lysyl-[protein] + (6R)-5,10-methylene-5,6,7,8-tetrahydrofolate + NH4(+). In terms of biological role, the glycine cleavage system catalyzes the degradation of glycine. The sequence is that of Aminomethyltransferase from Shigella sonnei (strain Ss046).